A 271-amino-acid polypeptide reads, in one-letter code: Ribonuclease 3 (271 aa).

Residues 5-139 (PALLELKLDY…IMAAIYLDGG (135 aa)) enclose the RNase III domain. Glu-52 contributes to the Mg(2+) binding site. Asp-56 is an active-site residue. Positions 125 and 128 each coordinate Mg(2+). The active site involves Glu-128. In terms of domain architecture, DRBM spans 172–241 (NFKSALQELA…ARGLYERLMG (70 aa)). The tract at residues 241–271 (GDPIVPLPDDSPGDSPDDSGDAAESGVISAT) is disordered. Residues 251 to 261 (SPGDSPDDSGD) are compositionally biased toward acidic residues.

The protein belongs to the ribonuclease III family. In terms of assembly, homodimer. Requires Mg(2+) as cofactor.

The protein localises to the cytoplasm. It catalyses the reaction Endonucleolytic cleavage to 5'-phosphomonoester.. In terms of biological role, digests double-stranded RNA. Involved in the processing of primary rRNA transcript to yield the immediate precursors to the large and small rRNAs (23S and 16S). Processes some mRNAs, and tRNAs when they are encoded in the rRNA operon. Processes pre-crRNA and tracrRNA of type II CRISPR loci if present in the organism. The protein is Ribonuclease 3 of Solibacter usitatus (strain Ellin6076).